The following is a 376-amino-acid chain: Queuine tRNA-ribosyltransferase (376 aa).

D90 functions as the Proton acceptor in the catalytic mechanism. Substrate-binding positions include 90–94, D144, Q193, and G220; that span reads DSGGF. The RNA binding stretch occupies residues 251–257; it reads GVGTPED. Residue D270 is the Nucleophile of the active site. Residues 275–279 form an RNA binding; important for wobble base 34 recognition region; sequence TRNAR. Residues C308, C310, C313, and H339 each contribute to the Zn(2+) site.

Belongs to the queuine tRNA-ribosyltransferase family. As to quaternary structure, homodimer. Within each dimer, one monomer is responsible for RNA recognition and catalysis, while the other monomer binds to the replacement base PreQ1. It depends on Zn(2+) as a cofactor.

The enzyme catalyses 7-aminomethyl-7-carbaguanine + guanosine(34) in tRNA = 7-aminomethyl-7-carbaguanosine(34) in tRNA + guanine. It participates in tRNA modification; tRNA-queuosine biosynthesis. In terms of biological role, catalyzes the base-exchange of a guanine (G) residue with the queuine precursor 7-aminomethyl-7-deazaguanine (PreQ1) at position 34 (anticodon wobble position) in tRNAs with GU(N) anticodons (tRNA-Asp, -Asn, -His and -Tyr). Catalysis occurs through a double-displacement mechanism. The nucleophile active site attacks the C1' of nucleotide 34 to detach the guanine base from the RNA, forming a covalent enzyme-RNA intermediate. The proton acceptor active site deprotonates the incoming PreQ1, allowing a nucleophilic attack on the C1' of the ribose to form the product. After dissociation, two additional enzymatic reactions on the tRNA convert PreQ1 to queuine (Q), resulting in the hypermodified nucleoside queuosine (7-(((4,5-cis-dihydroxy-2-cyclopenten-1-yl)amino)methyl)-7-deazaguanosine). This chain is Queuine tRNA-ribosyltransferase, found in Campylobacter concisus (strain 13826).